A 539-amino-acid polypeptide reads, in one-letter code: Glycerophosphoinositol inositolphosphodiesterase GDPD2 (539 aa).

Residues 1 to 38 are Cytoplasmic-facing; sequence MAESPGCCSVWARCLHCLYSCHWRKCPRERMQTSKCDC. Residues 39-59 traverse the membrane as a helical segment; sequence IWFGLLFLTFLLSLSWLYIGL. The Extracellular segment spans residues 60–85; sequence VLLNDLHNFNEFLFRRWGHWMDWSLA. The chain crosses the membrane as a helical span at residues 86 to 106; that stretch reads FLLVISLLVTYASLLLVLALL. Residues 107–121 are Cytoplasmic-facing; sequence LRLCRQPLHLHSLHK. Residues 122-142 form a helical membrane-spanning segment; it reads VLLLLIMLLVAAGLVGLDIQW. The Extracellular segment spans residues 143-154; it reads QQEWHSLRVSLQ. A helical membrane pass occupies residues 155–175; the sequence is ATAPFLHIGAAAGIALLAWPV. At 176-188 the chain is on the cytoplasmic side; the sequence is ADTFYRIHRRGPK. Residues 189–209 form a helical membrane-spanning segment; it reads ILLLLLFFGVVLVIYLAPLCI. Over 210 to 490 the chain is Extracellular; it reads SSPCIMEPRD…PIWLITPQTY (281 aa). Residues 224-479 enclose the GP-PDE domain; that stretch reads PGLVGHRGAP…NDCQLLQQMR (256 aa). E256, D258, and H271 together coordinate a divalent metal cation. N442 carries N-linked (GlcNAc...) asparagine glycosylation. Residues 491–511 traverse the membrane as a helical segment; sequence LIIWVITNCVSTMLLLWTFLL. The Cytoplasmic portion of the chain corresponds to 512 to 539; that stretch reads QRRFVKKRGKTGLETAVLLTRINNFMME.

Belongs to the glycerophosphoryl diester phosphodiesterase family. Requires Ca(2+) as cofactor.

It localises to the cell membrane. The protein resides in the cytoplasm. It is found in the cytoskeleton. The catalysed reaction is sn-glycero-3-phospho-1D-myo-inositol + H2O = 1D-myo-inositol 1-phosphate + glycerol + H(+). Has glycerophosphoinositol inositolphosphodiesterase activity and specifically hydrolyzes glycerophosphoinositol, with no activity for other substrates such as glycerophosphoinositol 4-phosphate, glycerophosphocholine, glycerophosphoethanolamine, and glycerophosphoserine. Accelerates the program of osteoblast differentiation and growth. May play a role in remodeling of the actin cytoskeleton. This Homo sapiens (Human) protein is Glycerophosphoinositol inositolphosphodiesterase GDPD2 (GDPD2).